A 193-amino-acid chain; its full sequence is Translocation protein SEC72 (193 aa).

Component of the heterotetrameric Sec62/63complex composed of SEC62, SEC63, SEC71 and SEC72. The Sec62/63 complex associates with the Sec61 complex to form the Sec complex. May interact with protein YLR301W. Part of a complex consisting of KAR2, SEC63, SEC66 and SEC72.

The protein localises to the cytoplasm. Acts as a non-essential component of the Sec62/63 complex which is involved in SRP-independent post-translational translocation across the endoplasmic reticulum (ER) and functions together with the Sec61 complex and KAR2 in a channel-forming translocon complex. A cycle of assembly and disassembly of Sec62/63 complex from SEC61 may govern the activity of the translocon. SEC72 may be involved in signal peptide recognition for a defined subset of leader peptides, or may increase the efficiency of unusual or 'difficult' secretory precursors to the translocation pore, it may be that this protein binds charged leader peptides to the membrane until they engage the translocation apparatus. This Saccharomyces cerevisiae (strain ATCC 204508 / S288c) (Baker's yeast) protein is Translocation protein SEC72 (SEC72).